A 109-amino-acid polypeptide reads, in one-letter code: Nucleoid-associated protein Asuc_0997 (109 aa).

Residues 1–23 (MFGKGGLGGLMKQAQQMQERMQK) form a disordered region.

The protein belongs to the YbaB/EbfC family. In terms of assembly, homodimer.

It is found in the cytoplasm. The protein localises to the nucleoid. Its function is as follows. Binds to DNA and alters its conformation. May be involved in regulation of gene expression, nucleoid organization and DNA protection. This is Nucleoid-associated protein Asuc_0997 from Actinobacillus succinogenes (strain ATCC 55618 / DSM 22257 / CCUG 43843 / 130Z).